The sequence spans 499 residues: Glutamyl-tRNA(Gln) amidotransferase subunit A (499 aa).

Catalysis depends on charge relay system residues Lys79 and Ser159. Ser183 functions as the Acyl-ester intermediate in the catalytic mechanism.

It belongs to the amidase family. GatA subfamily. Heterotrimer of A, B and C subunits.

The catalysed reaction is L-glutamyl-tRNA(Gln) + L-glutamine + ATP + H2O = L-glutaminyl-tRNA(Gln) + L-glutamate + ADP + phosphate + H(+). Its function is as follows. Allows the formation of correctly charged Gln-tRNA(Gln) through the transamidation of misacylated Glu-tRNA(Gln) in organisms which lack glutaminyl-tRNA synthetase. The reaction takes place in the presence of glutamine and ATP through an activated gamma-phospho-Glu-tRNA(Gln). This chain is Glutamyl-tRNA(Gln) amidotransferase subunit A, found in Granulibacter bethesdensis (strain ATCC BAA-1260 / CGDNIH1).